The following is a 276-amino-acid chain: Type II pantothenate kinase (276 aa).

An ATP-binding site is contributed by 8–15; the sequence is DAGGTLTK. Glu-76 (proton acceptor) is an active-site residue. Residues Thr-105, 127–131, Phe-143, and Ser-230 contribute to the ATP site; that span reads GGTIM.

Belongs to the type II pantothenate kinase family. Homodimer.

It is found in the cytoplasm. The enzyme catalyses (R)-pantothenate + ATP = (R)-4'-phosphopantothenate + ADP + H(+). Its pathway is cofactor biosynthesis; coenzyme A biosynthesis; CoA from (R)-pantothenate: step 1/5. In terms of biological role, catalyzes the phosphorylation of pantothenate (Pan), the first step in CoA biosynthesis. In Bacillus cereus (strain ATCC 10987 / NRS 248), this protein is Type II pantothenate kinase.